Here is a 130-residue protein sequence, read N- to C-terminus: Small ribosomal subunit protein uS11 (130 aa).

It belongs to the universal ribosomal protein uS11 family. In terms of assembly, part of the 30S ribosomal subunit. Interacts with proteins S7 and S18. Binds to IF-3.

Its function is as follows. Located on the platform of the 30S subunit, it bridges several disparate RNA helices of the 16S rRNA. Forms part of the Shine-Dalgarno cleft in the 70S ribosome. The sequence is that of Small ribosomal subunit protein uS11 from Caldicellulosiruptor bescii (strain ATCC BAA-1888 / DSM 6725 / KCTC 15123 / Z-1320) (Anaerocellum thermophilum).